Consider the following 595-residue polypeptide: Sialic acid-binding Ig-like lectin 12 (595 aa).

An N-terminal signal peptide occupies residues 1–18 (MLLLLLLLPPLLCGRVGA). Ig-like V-type domains follow at residues 19-142 (KEQK…VNVT) and 143-269 (ASQD…VHVT). Residues 19 to 481 (KEQKDYLLTM…RPISGVTLGA (463 aa)) lie on the Extracellular side of the membrane. Residues Cys-44 and Cys-104 are joined by a disulfide bond. Residues Asn-140, Asn-179, Asn-230, and Asn-290 are each glycosylated (N-linked (GlcNAc...) asparagine). 3 disulfides stabilise this stretch: Cys-166–Cys-299, Cys-171–Cys-231, and Cys-293–Cys-342. An Ig-like C2-type 1 domain is found at 275 to 358 (PTFSIPGTLE…AGVTMTRAVR (84 aa)). Residues Asn-360, Asn-367, and Asn-385 are each glycosylated (N-linked (GlcNAc...) asparagine). Positions 365–462 (PQNLTMTVFQ…GSQHISLSLS (98 aa)) constitute an Ig-like C2-type 2 domain. Cys-401 and Cys-446 are joined by a disulfide. The chain crosses the membrane as a helical span at residues 482–502 (FGGAGATALVFLYFCIIFVVV). The Cytoplasmic segment spans residues 503 to 595 (RSCRKKSARP…YEYSEINIPK (93 aa)). The disordered stretch occupies residues 512-560 (PAVGVGDTGMEDANAVRGSASQGPLIESPADDSPPHHAPPALATPSPEE). The ITIM motif signature appears at 563–568 (IQYASL). Residues Tyr-565 and Tyr-588 each carry the phosphotyrosine modification. Positions 586-591 (YEYSEI) match the SLAM-like motif motif.

Belongs to the immunoglobulin superfamily. SIGLEC (sialic acid binding Ig-like lectin) family. As to expression, isoform Short is highly expressed in spleen, small intestine and adrenal gland; it is lower expressed in thyroid, placenta, brain, stomach, bone marrow, spinal cord and breast. Isoform Long is highly expressed in spleen, small intestine and bone marrow; it is lower expressed in thyroid, placenta, thymus, trachea, stomach, lung, adrenal gland, fetal brain and testis.

Its subcellular location is the membrane. In terms of biological role, putative adhesion molecule that mediates sialic-acid dependent binding to cells. The sialic acid recognition site may be masked by cis interactions with sialic acids on the same cell surface. The protein is Sialic acid-binding Ig-like lectin 12 (SIGLEC12) of Homo sapiens (Human).